The sequence spans 508 residues: Kinesin light chain (508 aa).

Positions 34–129 form a coiled coil; it reads IAEVQKDNEK…KKHLEFMASV (96 aa). The interval 156-175 is disordered; that stretch reads DEENEDRHNMSPTPPSQFAN. At T168 the chain carries Phosphothreonine. 6 TPR repeats span residues 186-219, 228-261, 270-303, 312-345, 354-387, and 437-470; these read LRTLHNLVIQYASQGRYEVAVPLCKQALEDLERT, ATMLNILALVYRDQNKYKEAANLLNDALSIRGKT, AATLNNLAVLYGKRGKYKDAEPLCKRALEIREKV, AKQLNNLALLCQNQGKYDEVEKYYQRALDIYESK, AKTKNNLAGCYLKQGRYTEAEILYKQVLTRAHER, and TTTLKNLGALYRRQGMFEAAETLEDCAMRSKKEA. A Phosphothreonine modification is found at T477. S480 and S485 each carry phosphoserine. Positions 484-508 are disordered; that stretch reads TSNEKRRSKAIKEDLDFSEEKNAKP. The span at 493–508 shows a compositional bias: basic and acidic residues; sequence AIKEDLDFSEEKNAKP.

Belongs to the kinesin light chain family. Oligomeric complex composed of two heavy chains and two light chains. Ubiquitous.

The protein localises to the cytoplasm. It is found in the cytoskeleton. In terms of biological role, kinesin is a microtubule-associated force-producing protein that may play a role in organelle transport. The light chain may function in coupling of cargo to the heavy chain or in the modulation of its ATPase activity. The chain is Kinesin light chain (Klc) from Drosophila melanogaster (Fruit fly).